The sequence spans 150 residues: Nucleoside diphosphate kinase (150 aa).

Residues lysine 10, phenylalanine 58, arginine 86, threonine 92, arginine 103, and asparagine 113 each contribute to the ATP site. The active-site Pros-phosphohistidine intermediate is histidine 116.

The protein belongs to the NDK family. As to quaternary structure, homohexamer. The cofactor is Mg(2+).

The enzyme catalyses a 2'-deoxyribonucleoside 5'-diphosphate + ATP = a 2'-deoxyribonucleoside 5'-triphosphate + ADP. It catalyses the reaction a ribonucleoside 5'-diphosphate + ATP = a ribonucleoside 5'-triphosphate + ADP. Major role in the synthesis of nucleoside triphosphates other than ATP. The ATP gamma phosphate is transferred to the NDP beta phosphate via a ping-pong mechanism, using a phosphorylated active-site intermediate. The protein is Nucleoside diphosphate kinase (awd) of Drosophila yakuba (Fruit fly).